We begin with the raw amino-acid sequence, 183 residues long: Mitochondrial inner membrane protease subunit 2 (183 aa).

Residues Ala-13–Val-35 traverse the membrane as a helical segment. Active-site residues include Ser-42 and Lys-90. The interval Ser-161–Asp-183 is disordered. Residues Pro-164–Asp-183 show a composition bias toward basic and acidic residues.

Belongs to the peptidase S26 family. IMP2 subfamily. In terms of assembly, heterodimer of 2 subunits, IMMPL1 and IMMPL2.

It is found in the mitochondrion inner membrane. In terms of biological role, catalyzes the removal of transit peptides required for the targeting of proteins from the mitochondrial matrix, across the inner membrane, into the inter-membrane space. The sequence is that of Mitochondrial inner membrane protease subunit 2 (immp2l) from Danio rerio (Zebrafish).